Here is a 446-residue protein sequence, read N- to C-terminus: Tubulin beta-6 chain (446 aa).

Positions 1–4 (MREI) match the MREI motif motif. 8 residues coordinate GTP: glutamine 11, glutamate 69, serine 138, glycine 142, threonine 143, glycine 144, asparagine 204, and asparagine 226. Glutamate 69 is a Mg(2+) binding site. A disordered region spans residues 419 to 446 (VSEYQQYQDATADVEEYEEAEASPEKET). The segment covering 430–440 (ADVEEYEEAEA) has biased composition (acidic residues).

The protein belongs to the tubulin family. Dimer of alpha and beta chains. A typical microtubule is a hollow water-filled tube with an outer diameter of 25 nm and an inner diameter of 15 nM. Alpha-beta heterodimers associate head-to-tail to form protofilaments running lengthwise along the microtubule wall with the beta-tubulin subunit facing the microtubule plus end conferring a structural polarity. Microtubules usually have 13 protofilaments but different protofilament numbers can be found in some organisms and specialized cells. Requires Mg(2+) as cofactor. Post-translationally, some glutamate residues at the C-terminus are polyglycylated, resulting in polyglycine chains on the gamma-carboxyl group. Glycylation is mainly limited to tubulin incorporated into axonemes (cilia and flagella) whereas glutamylation is prevalent in neuronal cells, centrioles, axonemes, and the mitotic spindle. Both modifications can coexist on the same protein on adjacent residues, and lowering polyglycylation levels increases polyglutamylation, and reciprocally. The precise function of polyglycylation is still unclear. In terms of processing, some glutamate residues at the C-terminus are polyglutamylated, resulting in polyglutamate chains on the gamma-carboxyl group. Polyglutamylation plays a key role in microtubule severing by spastin (SPAST). SPAST preferentially recognizes and acts on microtubules decorated with short polyglutamate tails: severing activity by SPAST increases as the number of glutamates per tubulin rises from one to eight, but decreases beyond this glutamylation threshold. Highly expressed in bone marrow.

It is found in the cytoplasm. The protein resides in the cytoskeleton. In terms of biological role, tubulin is the major constituent of microtubules, a cylinder consisting of laterally associated linear protofilaments composed of alpha- and beta-tubulin heterodimers. Microtubules grow by the addition of GTP-tubulin dimers to the microtubule end, where a stabilizing cap forms. Below the cap, tubulin dimers are in GDP-bound state, owing to GTPase activity of alpha-tubulin. This Gallus gallus (Chicken) protein is Tubulin beta-6 chain.